A 436-amino-acid polypeptide reads, in one-letter code: GTPase Der (436 aa).

EngA-type G domains are found at residues 4–167 (PIVA…GEEE) and 176–351 (IRLS…ENHK). GTP contacts are provided by residues 10–17 (GRPNVGKS), 57–61 (DTGGI), 119–122 (NKVD), 182–189 (GRPNVGKS), 229–233 (DTAGM), and 294–297 (NKWD). The KH-like domain maps to 352–436 (KRVQSSTLNE…PIHIIARKRN (85 aa)).

Belongs to the TRAFAC class TrmE-Era-EngA-EngB-Septin-like GTPase superfamily. EngA (Der) GTPase family. As to quaternary structure, associates with the 50S ribosomal subunit.

GTPase that plays an essential role in the late steps of ribosome biogenesis. The sequence is that of GTPase Der from Staphylococcus aureus (strain USA300).